We begin with the raw amino-acid sequence, 357 residues long: A-type ATP synthase subunit C (357 aa).

Belongs to the V-ATPase V0D/AC39 subunit family. As to quaternary structure, has multiple subunits with at least A(3), B(3), C, D, E, F, H, I and proteolipid K(x).

It localises to the cell membrane. Its function is as follows. Component of the A-type ATP synthase that produces ATP from ADP in the presence of a proton gradient across the membrane. The polypeptide is A-type ATP synthase subunit C (Methanococcoides burtonii (strain DSM 6242 / NBRC 107633 / OCM 468 / ACE-M)).